A 280-amino-acid polypeptide reads, in one-letter code: Formamidopyrimidine-DNA glycosylase (280 aa).

The Schiff-base intermediate with DNA role is filled by Pro2. Catalysis depends on Glu3, which acts as the Proton donor. Lys59 (proton donor; for beta-elimination activity) is an active-site residue. Residues His92 and Arg111 each contribute to the DNA site. The FPG-type zinc finger occupies 239–273 (NVYGQTGLPCNRCGTPIVKTKVAQRGTHYCPQCQQ). The Proton donor; for delta-elimination activity role is filled by Arg263.

Belongs to the FPG family. As to quaternary structure, monomer. Zn(2+) is required as a cofactor.

The enzyme catalyses Hydrolysis of DNA containing ring-opened 7-methylguanine residues, releasing 2,6-diamino-4-hydroxy-5-(N-methyl)formamidopyrimidine.. It catalyses the reaction 2'-deoxyribonucleotide-(2'-deoxyribose 5'-phosphate)-2'-deoxyribonucleotide-DNA = a 3'-end 2'-deoxyribonucleotide-(2,3-dehydro-2,3-deoxyribose 5'-phosphate)-DNA + a 5'-end 5'-phospho-2'-deoxyribonucleoside-DNA + H(+). Functionally, involved in base excision repair of DNA damaged by oxidation or by mutagenic agents. Acts as a DNA glycosylase that recognizes and removes damaged bases. Has a preference for oxidized purines, such as 7,8-dihydro-8-oxoguanine (8-oxoG). Has AP (apurinic/apyrimidinic) lyase activity and introduces nicks in the DNA strand. Cleaves the DNA backbone by beta-delta elimination to generate a single-strand break at the site of the removed base with both 3'- and 5'-phosphates. This is Formamidopyrimidine-DNA glycosylase from Enterococcus faecalis (strain ATCC 700802 / V583).